We begin with the raw amino-acid sequence, 537 residues long: 2-isopropylmalate synthase (537 aa).

Residues 8 to 269 (VLIFDTTLRD…YFNGYLGRAE (262 aa)) form the Pyruvate carboxyltransferase domain. Residues aspartate 17, histidine 208, histidine 210, and asparagine 244 each coordinate Mn(2+). A regulatory domain region spans residues 408–537 (QLAGVQVSCG…QRAPLPAPAL (130 aa)).

Belongs to the alpha-IPM synthase/homocitrate synthase family. LeuA type 1 subfamily. In terms of assembly, homodimer. Mn(2+) is required as a cofactor.

It is found in the cytoplasm. It catalyses the reaction 3-methyl-2-oxobutanoate + acetyl-CoA + H2O = (2S)-2-isopropylmalate + CoA + H(+). It participates in amino-acid biosynthesis; L-leucine biosynthesis; L-leucine from 3-methyl-2-oxobutanoate: step 1/4. In terms of biological role, catalyzes the condensation of the acetyl group of acetyl-CoA with 3-methyl-2-oxobutanoate (2-ketoisovalerate) to form 3-carboxy-3-hydroxy-4-methylpentanoate (2-isopropylmalate). This Synechococcus sp. (strain RCC307) protein is 2-isopropylmalate synthase.